The primary structure comprises 293 residues: Putative ABC transporter ATP-binding protein AF_0731 (293 aa).

In terms of domain architecture, ABC transporter spans 2-236; it reads IEAVDLHFCY…RKLGIRSFSL (235 aa). 34 to 41 is a binding site for ATP; it reads GRNGAGKT.

Belongs to the ABC transporter superfamily.

It is found in the cell membrane. Its function is as follows. Probably part of an ABC transporter complex. Responsible for energy coupling to the transport system. The polypeptide is Putative ABC transporter ATP-binding protein AF_0731 (Archaeoglobus fulgidus (strain ATCC 49558 / DSM 4304 / JCM 9628 / NBRC 100126 / VC-16)).